The sequence spans 745 residues: Centromere protein I (745 aa).

Over residues 1 to 27 (MATPRLTRNSQQQNRISQGSNSRQTTL) the composition is skewed to polar residues. Residues 1–58 (MATPRLTRNSQQQNRISQGSNSRQTTLLDWKVKDKAGNSKSVLEESSSLEDSNHADDQ) are disordered. Residues 39–50 (SKSVLEESSSLE) are compositionally biased toward low complexity.

It belongs to the CENP-I/CTF3 family. In terms of assembly, component of the CENPA-CAD complex, composed of CENPI, CENPK, CENPL, CENPO, CENPP, CENPQ, CENPR and CENPS. The CENPA-CAD complex interacts with the CENPA-NAC complex, at least composed of CENPA, CENPC, CENPH, CENPM, CENPN, CENPT and CENPU. Interacts with SENP6. Sumoylated. Sumoylated form can be polyubiquitinated by RNF4, leading to its degradation. Desumoylation by SENP6 prevents its degradation. In terms of tissue distribution, highly expressed in testis, ovary and spleen. A much lower mRNA level is found in brain and lung, and no expression is detected in liver, kidney, heart, muscle, pituitary gland, prostate, epididymis and seminal vesicle.

The protein resides in the nucleus. It localises to the chromosome. The protein localises to the centromere. Functionally, component of the CENPA-CAD (nucleosome distal) complex, a complex recruited to centromeres which is involved in assembly of kinetochore proteins, mitotic progression and chromosome segregation. May be involved in incorporation of newly synthesized CENPA into centromeres via its interaction with the CENPA-NAC complex. Required for the localization of CENPF, MAD1L1 and MAD2 (MAD2L1 or MAD2L2) to kinetochores. Involved in the response of gonadal tissues to follicle-stimulating hormone. This is Centromere protein I (Cenpi) from Rattus norvegicus (Rat).